Reading from the N-terminus, the 420-residue chain is Forkhead box protein I3 (420 aa).

Disordered regions lie at residues 103–122, 234–306, and 364–396; these read GCSQRPFAQPAPAAPASPAA, FRRK…GPML, and DTLQLSNSTSNSTGQRSSYYSPFPASTSGGQSS. The span at 108-122 shows a compositional bias: low complexity; it reads PFAQPAPAAPASPAA. The residue at position 119 (S119) is a Phosphoserine. The fork-head DNA-binding region spans 145 to 239; it reads RPPYSYSALI…DNGNFRRKRK (95 aa). A Nuclear localization signal motif is present at residues 235–241; it reads RRKRKRR. Phosphoserine is present on residues S277, S285, and S287. The span at 294–306 shows a compositional bias: polar residues; the sequence is TKSTASSPGGPML. The 9aaTAD motif lies at 406 to 414; it reads SMVNSLIYP.

Post-translationally, phosphorylation promotes the transcription factor activity. Dephosphorylation by protein phosphatase 2A (PP2A) reduces its activity.

The protein resides in the nucleus. Functionally, transcription factor required for pharyngeal arch development, which is involved in hair, ear, jaw and dental development. May act as a pioneer transcription factor during pharyngeal arch development. Required for epithelial cell differentiation within the epidermis. Acts at multiple stages of otic placode induction: necessary for preplacodal ectoderm to execute an inner ear program. Required for hair follicle stem cell specification. Acts downstream of TBX1 for the formation of the thymus and parathyroid glands from the third pharyngeal pouch. The chain is Forkhead box protein I3 from Homo sapiens (Human).